A 380-amino-acid chain; its full sequence is Putative glutamate--cysteine ligase 2-1 (380 aa).

The protein belongs to the glutamate--cysteine ligase type 2 family. YbdK subfamily.

The enzyme catalyses L-cysteine + L-glutamate + ATP = gamma-L-glutamyl-L-cysteine + ADP + phosphate + H(+). ATP-dependent carboxylate-amine ligase which exhibits weak glutamate--cysteine ligase activity. The sequence is that of Putative glutamate--cysteine ligase 2-1 from Mycolicibacterium vanbaalenii (strain DSM 7251 / JCM 13017 / BCRC 16820 / KCTC 9966 / NRRL B-24157 / PYR-1) (Mycobacterium vanbaalenii).